The chain runs to 568 residues: Oxygen-dependent choline dehydrogenase (568 aa).

FAD is bound at residue 8 to 37; that stretch reads DYIIIGAGSAGNTLAARLTEDAGVTVLLLE. Catalysis depends on His-477, which acts as the Proton acceptor.

This sequence belongs to the GMC oxidoreductase family. FAD is required as a cofactor.

The enzyme catalyses choline + A = betaine aldehyde + AH2. It catalyses the reaction betaine aldehyde + NAD(+) + H2O = glycine betaine + NADH + 2 H(+). It functions in the pathway amine and polyamine biosynthesis; betaine biosynthesis via choline pathway; betaine aldehyde from choline (cytochrome c reductase route): step 1/1. Functionally, involved in the biosynthesis of the osmoprotectant glycine betaine. Catalyzes the oxidation of choline to betaine aldehyde and betaine aldehyde to glycine betaine at the same rate. The chain is Oxygen-dependent choline dehydrogenase from Pseudomonas syringae pv. tomato (strain ATCC BAA-871 / DC3000).